Here is a 424-residue protein sequence, read N- to C-terminus: Serine--tRNA ligase (424 aa).

232 to 234 lines the L-serine pocket; the sequence is TAE. 263–265 is a binding site for ATP; sequence RKE. Glutamate 286 contacts L-serine. 350 to 353 lines the ATP pocket; that stretch reads EISS. Serine 386 contributes to the L-serine binding site.

Belongs to the class-II aminoacyl-tRNA synthetase family. Type-1 seryl-tRNA synthetase subfamily. In terms of assembly, homodimer. The tRNA molecule binds across the dimer.

The protein resides in the cytoplasm. It catalyses the reaction tRNA(Ser) + L-serine + ATP = L-seryl-tRNA(Ser) + AMP + diphosphate + H(+). The catalysed reaction is tRNA(Sec) + L-serine + ATP = L-seryl-tRNA(Sec) + AMP + diphosphate + H(+). The protein operates within aminoacyl-tRNA biosynthesis; selenocysteinyl-tRNA(Sec) biosynthesis; L-seryl-tRNA(Sec) from L-serine and tRNA(Sec): step 1/1. Catalyzes the attachment of serine to tRNA(Ser). Is also able to aminoacylate tRNA(Sec) with serine, to form the misacylated tRNA L-seryl-tRNA(Sec), which will be further converted into selenocysteinyl-tRNA(Sec). In Thermodesulfovibrio yellowstonii (strain ATCC 51303 / DSM 11347 / YP87), this protein is Serine--tRNA ligase.